Here is a 250-residue protein sequence, read N- to C-terminus: Triosephosphate isomerase (250 aa).

Residue 9-11 coordinates substrate; sequence NWK. The active-site Electrophile is H96. E168 serves as the catalytic Proton acceptor. Substrate-binding positions include G174, S216, and 237–238; that span reads GG.

This sequence belongs to the triosephosphate isomerase family. In terms of assembly, homodimer.

It localises to the cytoplasm. It carries out the reaction D-glyceraldehyde 3-phosphate = dihydroxyacetone phosphate. The protein operates within carbohydrate biosynthesis; gluconeogenesis. It participates in carbohydrate degradation; glycolysis; D-glyceraldehyde 3-phosphate from glycerone phosphate: step 1/1. Involved in the gluconeogenesis. Catalyzes stereospecifically the conversion of dihydroxyacetone phosphate (DHAP) to D-glyceraldehyde-3-phosphate (G3P). This is Triosephosphate isomerase from Leptospira interrogans serogroup Icterohaemorrhagiae serovar Lai (strain 56601).